We begin with the raw amino-acid sequence, 322 residues long: Quinolinate synthase (322 aa).

Histidine 37 and serine 54 together coordinate iminosuccinate. A [4Fe-4S] cluster-binding site is contributed by cysteine 99. Residues 125–127 (YIN) and serine 142 each bind iminosuccinate. Cysteine 185 provides a ligand contact to [4Fe-4S] cluster. Residues 211-213 (HPE) and threonine 228 contribute to the iminosuccinate site. Position 278 (cysteine 278) interacts with [4Fe-4S] cluster.

Belongs to the quinolinate synthase family. Type 2 subfamily. [4Fe-4S] cluster is required as a cofactor.

The protein localises to the cytoplasm. It carries out the reaction iminosuccinate + dihydroxyacetone phosphate = quinolinate + phosphate + 2 H2O + H(+). It participates in cofactor biosynthesis; NAD(+) biosynthesis; quinolinate from iminoaspartate: step 1/1. Catalyzes the condensation of iminoaspartate with dihydroxyacetone phosphate to form quinolinate. The sequence is that of Quinolinate synthase from Prosthecochloris aestuarii (strain DSM 271 / SK 413).